The following is a 230-amino-acid chain: Cytochrome c-552 (230 aa).

The first 47 residues, 1-47, serve as a signal peptide directing secretion; the sequence is MTTYLSQDRLRNKENDTMTYQHSKMYQSRTFLLFSALLLVAGQASAA. Residues Cys-63, Cys-66, His-67, Cys-166, Cys-169, and His-170 each contribute to the heme c site.

Binds 2 heme c groups covalently per subunit.

It localises to the periplasm. Functionally, diheme, high potential cytochrome c. The chain is Cytochrome c-552 (cyc1) from Acidithiobacillus ferridurans.